The chain runs to 567 residues: MNHSAVAQTGLYLLVLLALAWPLGRYLAALLEGRLAQRFAWMGRIERGILWLMGAAPDEEMGWKRYAAAILLFNLAGVVLLFLLQRWQGMLPLNPAGLEGMSADSALNTAVSFVTNTNWQGYSGETTMSLLTQMLGLAVQNFLSAATGIAVVVALVRGFVRSGGGAIGNAWLDLLRATLWLLLPLSIVVALVLVWQGVVQNWYAGLTISSLESHTTQLLASGPVASQEAIKLLGTNGGGFFNANSAHPFENPTPFSNWVEMLSIFLVPAALVVMFGRMVGDLRQGVVLLAAMTVLFVGAFAVVYLAESQANPLLTALGAAGDSGNLEGKEVRFGVLASSLFATITTAASCGAVNAMHDSLMPLGGGMTMLLMQLGEVVFGGVGSGLYGMLLFAVLAVFMAGLMIGRTPEYLGKKIGAPEMKLVSVAILVGPLLVLAGTAIAVLTEAGRAGMANPGAHGFSEVLYAFSSAANNNGSAFAGLSANTPFYNLMLAVAMWFGRFAVIVPVLALAGSLAGKPRLAATAGTLPTHGPLFVVLLVLSVLLIGALTYIPALALGPVIDHLQLFSR.

12 helical membrane-spanning segments follow: residues Leu-11 to Leu-31, Ala-67 to Trp-87, Gly-136 to Val-156, Leu-179 to Val-199, Phe-255 to Phe-275, Val-286 to Ala-306, Phe-333 to Val-353, Leu-363 to Gly-383, Gly-385 to Gly-405, Leu-422 to Val-442, Leu-489 to Leu-509, and Leu-532 to Ala-552.

Belongs to the KdpA family. The system is composed of three essential subunits: KdpA, KdpB and KdpC.

The protein localises to the cell inner membrane. Functionally, part of the high-affinity ATP-driven potassium transport (or Kdp) system, which catalyzes the hydrolysis of ATP coupled with the electrogenic transport of potassium into the cytoplasm. This subunit binds the periplasmic potassium ions and delivers the ions to the membrane domain of KdpB through an intramembrane tunnel. In Laribacter hongkongensis (strain HLHK9), this protein is Potassium-transporting ATPase potassium-binding subunit.